A 50-amino-acid chain; its full sequence is MVILLHKFQLDELIYIVLAQGYHQIPEYVRFQFPLYAHKDIHLYMKKLVL.

In terms of biological role, involved in T4 DNA replication. Binds to ssDNA. The sequence is that of DNA replication protein repEA (repEA) from Enterobacteria phage T4 (Bacteriophage T4).